We begin with the raw amino-acid sequence, 631 residues long: Chaperone protein HtpG (631 aa).

The tract at residues 1 to 338 (MILKEQETLG…CNDLPLNISR (338 aa)) is a; substrate-binding. The tract at residues 339–554 (EMLQHNRITQ…SNNMTTHMAK (216 aa)) is b. Residues 555-631 (LIVASGQNKP…KLLNHDTIVN (77 aa)) are c.

Belongs to the heat shock protein 90 family. As to quaternary structure, homodimer.

The protein resides in the cytoplasm. In terms of biological role, molecular chaperone. Has ATPase activity. The polypeptide is Chaperone protein HtpG (Baumannia cicadellinicola subsp. Homalodisca coagulata).